The sequence spans 316 residues: MSRPGEHRVVHTLRTQAPARRLYELVARVEDWPAVFEPTVHVQVLERGPGTERFRIWARVGGRVKTWTSRRTLDPDTLRVTFRQELTQPPIASMGGSWEFRGDGDGTEVVLTHDFAAVDEAALPGLREALDANSGKELAALVALAERRQPPEELVFTFEDTLRVPSGDDAYAFIERSDLWQERLPHVRKVTLTEEAAGTGPAETRDMTVQDMTMETVTTDGGTHTTRSIRLCVPARSIVYKQLVPPALLSGHCGAWTFGEDTVTARHTVAIDPARVEEVLGKGATVADARTHLREVLGANSRATLRHAAAAAGPAS.

It functions in the pathway antibiotic biosynthesis; actinorhodin biosynthesis. Is needed for correct cyclization of the oligoketide leading to isochromanequinone formation. This chain is Actinorhodin polyketide synthase bifunctional cyclase/dehydratase, found in Streptomyces coelicolor (strain ATCC BAA-471 / A3(2) / M145).